The sequence spans 196 residues: Probable GTP-binding protein EngB (196 aa).

The EngB-type G domain occupies 22 to 195 (KLPEVALAGR…WNWIESITKV (174 aa)). Residues 30–37 (GRSNVGKS), 57–61 (GKTQT), 75–78 (DVPG), 142–145 (TKID), and 174–176 (FSA) contribute to the GTP site. Residues S37 and T59 each contribute to the Mg(2+) site.

This sequence belongs to the TRAFAC class TrmE-Era-EngA-EngB-Septin-like GTPase superfamily. EngB GTPase family. Mg(2+) is required as a cofactor.

Functionally, necessary for normal cell division and for the maintenance of normal septation. The protein is Probable GTP-binding protein EngB of Ligilactobacillus salivarius (strain UCC118) (Lactobacillus salivarius).